Reading from the N-terminus, the 289-residue chain is MLSTMQTVGAILMLSIVFVAGTKRHACDSKYSEVTPTHTMCLTDNANAVAVTLTQEVKVQIVRMHNVIRATVNDAANMMKMEWDDRLAAVAQKWAMQCILGHDGFANHAEPDLPGYVGQNVGWSNYHMTFPDVVDLWAAEIEDYEYGVWNDNTGHYIQQIYAEASRIGCGQSACGEDRYFVCNYYKSTMGNTPYAQGSRCGQCPNSCWEELCDCTSGPDACCNGGSLNIDTCECQCPRLWSGADCQEKQCPDHDYEDMCDYPDVVNNPEYWCQFSNIRSDCPIRCGDCP.

The N-terminal stretch at 1–24 (MLSTMQTVGAILMLSIVFVAGTKR) is a signal peptide. Residue Glu-33 is modified to 4-carboxyglutamate. The SCP domain occupies 62 to 184 (VRMHNVIRAT…GEDRYFVCNY (123 aa)).

Belongs to the CRISP family. Post-translationally, contains 11 disulfide bonds. As to expression, expressed by the venom duct.

It localises to the secreted. Functionally, has no proteolytic activity. The polypeptide is Cysteine-rich venom protein Mr30 (Conus marmoreus (Marble cone)).